The primary structure comprises 71 residues: MTLTVKCPQCQKPVTWDASSAFKPFCSERCKLIDLGDWASEKHAIPVKDDISEELLDQLGYEEADFFKTAD.

Positions 7, 10, 26, and 30 each coordinate Zn(2+).

The protein belongs to the DNA gyrase inhibitor YacG family. Interacts with GyrB. Zn(2+) is required as a cofactor.

In terms of biological role, inhibits all the catalytic activities of DNA gyrase by preventing its interaction with DNA. Acts by binding directly to the C-terminal domain of GyrB, which probably disrupts DNA binding by the gyrase. The polypeptide is DNA gyrase inhibitor YacG (Shewanella amazonensis (strain ATCC BAA-1098 / SB2B)).